A 751-amino-acid polypeptide reads, in one-letter code: CCR4-NOT transcription complex subunit 3 (751 aa).

Residues 240-534 (ATSPPSHSHM…QFSTTPEIKA (295 aa)) are disordered. Residues 257-268 (SSSTPTSTTSSS) show a composition bias toward low complexity. Positions 284 to 293 (DDKKRGRSTD) are enriched in basic and acidic residues. At Thr-292 the chain carries Phosphothreonine. The segment covering 294–315 (SEVSQSPAKNGSKPVHSNQHPQ) has biased composition (polar residues). Residue Ser-299 is modified to Phosphoserine. A compositionally biased stretch (pro residues) spans 317-330 (PAVPPTYPSGPPPT). Residues 339 to 348 (GNNGASTPAA) are compositionally biased toward polar residues. The segment covering 441-450 (SSSGGSSASS) has biased composition (low complexity). A compositionally biased stretch (polar residues) spans 463 to 472 (APSTSKESST). The span at 473–498 (AAPSGAGNVASGSGNNSGGPSLLVPL) shows a compositional bias: low complexity. Position 540 is a phosphoserine (Ser-540). Residues 659 to 751 (EFYQRLSTET…YRYLEDRDLQ (93 aa)) form a repressor domain region.

The protein belongs to the CNOT2/3/5 family. In terms of assembly, component of the CCR4-NOT complex; distinct complexes seem to exist that differ in the participation of probably mutually exclusive catalytic subunits. In the complex interacts directly with CNOT2. Interacts with TIP120B and NANOS2. Interacts with EBF1. Interacts in an RNA-independent manner with BICC1 (via KH domains).

Its subcellular location is the nucleus. It localises to the cytoplasm. The protein localises to the P-body. In terms of biological role, component of the CCR4-NOT complex which is one of the major cellular mRNA deadenylases and is linked to various cellular processes including bulk mRNA degradation, miRNA-mediated repression, translational repression during translational initiation and general transcription regulation. Additional complex functions may be a consequence of its influence on mRNA expression. May be involved in metabolic regulation; may be involved in recruitment of the CCR4-NOT complex to deadenylation target mRNAs involved in energy metabolism. Involved in mitotic progression and regulation of the spindle assembly checkpoint by regulating the stability of MAD1L1 mRNA. Can repress transcription and may link the CCR4-NOT complex to transcriptional regulation; the repressive function may involve histone deacetylases. Involved in the maintenance of embryonic stem (ES) cell identity; prevents their differentiation towards extraembryonic trophectoderm lineages. In Mus musculus (Mouse), this protein is CCR4-NOT transcription complex subunit 3 (Cnot3).